The sequence spans 67 residues: uncharacterized protein (67 aa).

This is an uncharacterized protein from Acidianus filamentous virus 2 (isolate Italy/Pozzuoli) (AFV-2).